Here is a 344-residue protein sequence, read N- to C-terminus: Dihydroorotase (344 aa).

H13 and H15 together coordinate Zn(2+). Residues 15–17 (HLR) and N41 contribute to the substrate site. 3 residues coordinate Zn(2+): K99, H136, and H174. Residue K99 is modified to N6-carboxylysine. H136 provides a ligand contact to substrate. L219 is a substrate binding site. Position 247 (D247) interacts with Zn(2+). D247 is a catalytic residue. Residues H251 and A263 each coordinate substrate.

The protein belongs to the metallo-dependent hydrolases superfamily. DHOase family. Class II DHOase subfamily. Homodimer. Zn(2+) is required as a cofactor.

It catalyses the reaction (S)-dihydroorotate + H2O = N-carbamoyl-L-aspartate + H(+). It participates in pyrimidine metabolism; UMP biosynthesis via de novo pathway; (S)-dihydroorotate from bicarbonate: step 3/3. Functionally, catalyzes the reversible cyclization of carbamoyl aspartate to dihydroorotate. The chain is Dihydroorotase from Acinetobacter baylyi (strain ATCC 33305 / BD413 / ADP1).